Reading from the N-terminus, the 515-residue chain is Aldehyde dehydrogenase (515 aa).

Residues 1-12 (MTVAEQQPQHQG) show a composition bias toward polar residues. The interval 1–20 (MTVAEQQPQHQGYANPGTPG) is disordered. 228–234 (GFGLEAG) contributes to the NAD(+) binding site. Active-site residues include Glu272 and Cys311.

The protein belongs to the aldehyde dehydrogenase family.

The enzyme catalyses an aldehyde + NAD(+) + H2O = a carboxylate + NADH + 2 H(+). The protein is Aldehyde dehydrogenase (aldA) of Deinococcus radiodurans (strain ATCC 13939 / DSM 20539 / JCM 16871 / CCUG 27074 / LMG 4051 / NBRC 15346 / NCIMB 9279 / VKM B-1422 / R1).